We begin with the raw amino-acid sequence, 90 residues long: MTICVRVRVSGRVQGVGYRYYTTTHAKALGVKGWIRNLPGGGVEAVLEGERKSVGELLGLMKSGPSGAMVSGMEIAEVECKGHDDFKIIY.

An Acylphosphatase-like domain is found at 4-90; sequence CVRVRVSGRV…KGHDDFKIIY (87 aa). Active-site residues include arginine 19 and asparagine 37.

This sequence belongs to the acylphosphatase family.

It catalyses the reaction an acyl phosphate + H2O = a carboxylate + phosphate + H(+). The protein is Acylphosphatase (acyP) of Methanothrix thermoacetophila (strain DSM 6194 / JCM 14653 / NBRC 101360 / PT) (Methanosaeta thermophila).